The chain runs to 255 residues: NAD kinase (255 aa).

Residue Asp-44 is the Proton acceptor of the active site. NAD(+) is bound by residues Asp-44–Gly-45, His-49, Asn-114–Glu-115, Asp-144, Ala-152, Ser-155–Ser-160, and Gln-216.

This sequence belongs to the NAD kinase family. A divalent metal cation is required as a cofactor.

The protein localises to the cytoplasm. It catalyses the reaction NAD(+) + ATP = ADP + NADP(+) + H(+). In terms of biological role, involved in the regulation of the intracellular balance of NAD and NADP, and is a key enzyme in the biosynthesis of NADP. Catalyzes specifically the phosphorylation on 2'-hydroxyl of the adenosine moiety of NAD to yield NADP. This is NAD kinase from Rickettsia peacockii (strain Rustic).